The sequence spans 262 residues: 3-deoxy-manno-octulosonate cytidylyltransferase (262 aa).

It belongs to the KdsB family.

It localises to the cytoplasm. The catalysed reaction is 3-deoxy-alpha-D-manno-oct-2-ulosonate + CTP = CMP-3-deoxy-beta-D-manno-octulosonate + diphosphate. The protein operates within nucleotide-sugar biosynthesis; CMP-3-deoxy-D-manno-octulosonate biosynthesis; CMP-3-deoxy-D-manno-octulosonate from 3-deoxy-D-manno-octulosonate and CTP: step 1/1. It participates in bacterial outer membrane biogenesis; lipopolysaccharide biosynthesis. In terms of biological role, activates KDO (a required 8-carbon sugar) for incorporation into bacterial lipopolysaccharide in Gram-negative bacteria. The chain is 3-deoxy-manno-octulosonate cytidylyltransferase from Blochmanniella pennsylvanica (strain BPEN).